Consider the following 214-residue polypeptide: Small ribosomal subunit protein uS5 (214 aa).

Residues 55 to 118 (LKYERLDVGI…RNAKLNITPV (64 aa)) enclose the S5 DRBM domain.

It belongs to the universal ribosomal protein uS5 family. Part of the 30S ribosomal subunit. Contacts protein S4.

With S4 and S12 plays an important role in translational accuracy. This is Small ribosomal subunit protein uS5 from Staphylothermus marinus (strain ATCC 43588 / DSM 3639 / JCM 9404 / F1).